The chain runs to 425 residues: Dihydroorotase (425 aa).

Residues histidine 61 and histidine 63 each contribute to the Zn(2+) site. Substrate is bound by residues 63-65 (HLR) and asparagine 95. The Zn(2+) site is built by aspartate 153, histidine 180, and histidine 233. Asparagine 279 serves as a coordination point for substrate. Aspartate 306 contributes to the Zn(2+) binding site. Aspartate 306 is an active-site residue. Residue histidine 310 participates in substrate binding.

This sequence belongs to the metallo-dependent hydrolases superfamily. DHOase family. Class I DHOase subfamily. Zn(2+) serves as cofactor.

The enzyme catalyses (S)-dihydroorotate + H2O = N-carbamoyl-L-aspartate + H(+). The protein operates within pyrimidine metabolism; UMP biosynthesis via de novo pathway; (S)-dihydroorotate from bicarbonate: step 3/3. Functionally, catalyzes the reversible cyclization of carbamoyl aspartate to dihydroorotate. This Trichlorobacter lovleyi (strain ATCC BAA-1151 / DSM 17278 / SZ) (Geobacter lovleyi) protein is Dihydroorotase.